A 293-amino-acid polypeptide reads, in one-letter code: Delta(3,5)-Delta(2,4)-dienoyl-CoA isomerase, mitochondrial (293 aa).

Substrate contacts are provided by residues 84 to 88 (AGLNL) and Gly142.

Belongs to the enoyl-CoA hydratase/isomerase family.

The protein localises to the mitochondrion. It catalyses the reaction (3E,5Z)-octadienoyl-CoA = (2E,4E)-octadienoyl-CoA. It carries out the reaction (3E,5Z,8Z,11Z,14Z)-eicosapentaenoyl-CoA = (2E,4E,8Z,11Z,14Z)-eicosapentaenoyl-CoA. It functions in the pathway lipid metabolism; fatty acid beta-oxidation. Its function is as follows. Isomerization of 3-trans,5-cis-dienoyl-CoA to 2-trans,4-trans-dienoyl-CoA. This is Delta(3,5)-Delta(2,4)-dienoyl-CoA isomerase, mitochondrial (ech1) from Dictyostelium discoideum (Social amoeba).